Reading from the N-terminus, the 132-residue chain is Acetylcholinesterase (132 aa).

Residue Asn37 is glycosylated (N-linked (GlcNAc...) asparagine). Cys45 and Cys72 are disulfide-bonded.

It belongs to the type-B carboxylesterase/lipase family.

The protein localises to the synapse. It is found in the secreted. The protein resides in the cell membrane. The enzyme catalyses acetylcholine + H2O = choline + acetate + H(+). In terms of biological role, rapidly hydrolyzes choline released into the synapse. The polypeptide is Acetylcholinesterase (ACE-1) (Culex pipiens pipiens (Northern house mosquito)).